Here is a 104-residue protein sequence, read N- to C-terminus: Large ribosomal subunit protein uL24 (104 aa).

The protein belongs to the universal ribosomal protein uL24 family. As to quaternary structure, part of the 50S ribosomal subunit.

Its function is as follows. One of two assembly initiator proteins, it binds directly to the 5'-end of the 23S rRNA, where it nucleates assembly of the 50S subunit. Functionally, one of the proteins that surrounds the polypeptide exit tunnel on the outside of the subunit. The sequence is that of Large ribosomal subunit protein uL24 from Corynebacterium diphtheriae (strain ATCC 700971 / NCTC 13129 / Biotype gravis).